A 457-amino-acid polypeptide reads, in one-letter code: Phenylalanine-4-hydroxylase (457 aa).

An ACT domain is found at 31 to 108 (TIVFTLREKA…EKKVLVQDWN (78 aa)). The Fe cation site is built by His-285, His-290, and Glu-330.

The protein belongs to the biopterin-dependent aromatic amino acid hydroxylase family. As to quaternary structure, homotetramer. Fe(2+) serves as cofactor. Expressed in the seam cells of the lateral hypodermis, in the ventral hypodermis and in the hyp7 hypodermal syncytium, in hypodermal cells in the tail and in body wall muscle cells (at protein level).

It localises to the cytoplasm. It carries out the reaction (6R)-L-erythro-5,6,7,8-tetrahydrobiopterin + L-phenylalanine + O2 = (4aS,6R)-4a-hydroxy-L-erythro-5,6,7,8-tetrahydrobiopterin + L-tyrosine. It catalyses the reaction (6R)-L-erythro-5,6,7,8-tetrahydrobiopterin + L-tryptophan + O2 = 5-hydroxy-L-tryptophan + (4aS,6R)-4a-hydroxy-L-erythro-5,6,7,8-tetrahydrobiopterin. The protein operates within amino-acid degradation; L-phenylalanine degradation; acetoacetate and fumarate from L-phenylalanine: step 1/6. With respect to regulation, inhibited by tetrahydrobiopterin. Unlike its mammalian orthologs, pah-1 does not exhibit allosteric binding behavior for phenylalanine. Functionally, catalyzes the hydroxylation of L-phenylalanine to L-tyrosine. Catalyzes the hydroxylation of tryptophan to 5-hydroxy-L-tryptophan. Plays a role in the biosynthesis of a melanin-like cuticle pigment. The polypeptide is Phenylalanine-4-hydroxylase (Caenorhabditis elegans).